A 191-amino-acid polypeptide reads, in one-letter code: Protein Ves (191 aa).

Belongs to the Ves family.

The sequence is that of Protein Ves from Escherichia coli (strain UTI89 / UPEC).